The sequence spans 64 residues: Small ribosomal subunit protein bS21 (64 aa).

The protein belongs to the bacterial ribosomal protein bS21 family.

The sequence is that of Small ribosomal subunit protein bS21 from Oenococcus oeni (strain ATCC BAA-331 / PSU-1).